The following is a 361-amino-acid chain: Large ribosomal subunit protein uL3 (361 aa).

A disordered region spans residues 339–361 (RPPKKKPPVQRPQITYVSVESKQ). Positions 350–361 (PQITYVSVESKQ) are enriched in polar residues.

The protein belongs to the universal ribosomal protein uL3 family. Part of the 50S ribosomal subunit. Forms a cluster with proteins L14 and L24e.

Functionally, one of the primary rRNA binding proteins, it binds directly near the 3'-end of the 23S rRNA, where it nucleates assembly of the 50S subunit. This Pyrococcus abyssi (strain GE5 / Orsay) protein is Large ribosomal subunit protein uL3.